The following is a 175-amino-acid chain: Large ribosomal subunit protein uL10 (175 aa).

Belongs to the universal ribosomal protein uL10 family. As to quaternary structure, part of the ribosomal stalk of the 50S ribosomal subunit. The N-terminus interacts with L11 and the large rRNA to form the base of the stalk. The C-terminus forms an elongated spine to which L12 dimers bind in a sequential fashion forming a multimeric L10(L12)X complex.

Its function is as follows. Forms part of the ribosomal stalk, playing a central role in the interaction of the ribosome with GTP-bound translation factors. The protein is Large ribosomal subunit protein uL10 of Prochlorococcus marinus (strain MIT 9215).